Consider the following 887-residue polypeptide: MSGVNEIRSTFLDYFKKNGHEIVPSSPLVPRNDPTLMFTNAGMVQFKNVFTGLESRPYSTAASAQKCVRAGGKHNDLDNVGYTARHHTFFEMLGNFSFGDYFKEEAITHAWNLITKEFGIDRNRLLVTVYHTDDEAFNLWKKIAGFSDDRIIRIPTSDNFWAMGDTGPCGPCSEIFYDHGDHIWGGPPGSPEEDGDRFIEIWNLVFMQYEQLTKEERIDLPRPSIDTGMGLERISALLQGKHDNYDTDLFRALIAASVEATGVPAEGEHRASHRVIADHLRSSAFLIADGVLPSSEGRGYVLRRIMRRAMRHAELLGSRDPLIYRLLPALIQQMGRAYPELVRAEALISETLKLEETRFRKTLERGLSLLSDATSTLHKGDMLDGETAFKLYDTYGFPLDLTQDALRAREIGVDISGFTDAMQRQKAEARSHWAGSGDKATETVWFELKEKFGATEFLGYDTESAEGVIQAIVRDGKEVDSAAEGETVHIVVNQTPFYGESGGQMGDTGVIVGDAGTFDVSGTQKKGEGLFVHSGTVSKGGLKVNEAVQLTVDHDRRSRLRANHSATHLLHEALREVLGTHVAQKGSLVAPERLRFDVSHPKPMSAEELKVVEDMANEIVLQNSPVVTRLMSVDDAIAEGAMALFGEKYGDEVRVVSMGTGLHGAKANRPYSVELCGGTHVAATGQIGLIRILGESAVGSGVRRLEAVTGQGALAYLAEQDERVKALASSLKVQPGDVLSRVEGLLDERKKLERELADARKKLAMGGGSSDAGANDVQQVAGVNFLAKSLSGIDAKDLKGLADEAKANLGSGVVLLIAVSDDGKASAVAAVTEDLTGRFSAVDIVRTASAALGGKGGGGRPDMAQAGGPDGTKAKEAIEAVAAALAA.

Residues His-564, His-568, Cys-676, and His-680 each coordinate Zn(2+).

The protein belongs to the class-II aminoacyl-tRNA synthetase family. Requires Zn(2+) as cofactor.

The protein resides in the cytoplasm. It catalyses the reaction tRNA(Ala) + L-alanine + ATP = L-alanyl-tRNA(Ala) + AMP + diphosphate. In terms of biological role, catalyzes the attachment of alanine to tRNA(Ala) in a two-step reaction: alanine is first activated by ATP to form Ala-AMP and then transferred to the acceptor end of tRNA(Ala). Also edits incorrectly charged Ser-tRNA(Ala) and Gly-tRNA(Ala) via its editing domain. This chain is Alanine--tRNA ligase, found in Agrobacterium fabrum (strain C58 / ATCC 33970) (Agrobacterium tumefaciens (strain C58)).